The primary structure comprises 150 residues: Globin-3 (150 aa).

Residues 11–150 (PLSAAEKTKI…MICILLRSAY (140 aa)) enclose the Globin domain. 2 residues coordinate heme b: His74 and His106.

This sequence belongs to the globin family. In terms of assembly, monomer.

This Petromyzon marinus (Sea lamprey) protein is Globin-3.